A 75-amino-acid chain; its full sequence is Large ribosomal subunit protein bL31 (75 aa).

Belongs to the bacterial ribosomal protein bL31 family. Type A subfamily. Part of the 50S ribosomal subunit.

In terms of biological role, binds the 23S rRNA. The protein is Large ribosomal subunit protein bL31 of Chlorobaculum tepidum (strain ATCC 49652 / DSM 12025 / NBRC 103806 / TLS) (Chlorobium tepidum).